We begin with the raw amino-acid sequence, 402 residues long: Multidrug resistance protein MdtH (402 aa).

The Cytoplasmic segment spans residues 1–12 (MSRVSQARNLGK). A helical transmembrane segment spans residues 13-33 (YFLLIDNMLVVLGFFVVFPLI). At 34–98 (SIRFVDQMGW…GFATMGIAHE (65 aa)) the chain is on the periplasmic side. A helical transmembrane segment spans residues 99-116 (PWLLWFSCLLSGLGGTLF). Over 117 to 138 (DPPRSALVVKLIRPQQRGRFFS) the chain is Cytoplasmic. A helical transmembrane segment spans residues 139–159 (LLMMQDSAGAVIGALLGSWLL). Topologically, residues 160 to 164 (QYDFR) are periplasmic. Residues 165-185 (LVCATGAVLFVLCAAFNAWLL) traverse the membrane as a helical segment. Residues 186 to 213 (PAWKLSTVRTPVREGMTRVMRDKRFVTY) are Cytoplasmic-facing. Residues 214 to 234 (VLTLAGYYMLAVQVMLMLPIM) form a helical membrane-spanning segment. The Periplasmic portion of the chain corresponds to 235-243 (VNDVAGAPS). A helical membrane pass occupies residues 244–264 (AVKWMYAIEACLSLTLLYPIA). Residues 265-276 (RWSEKHFRLEHR) are Cytoplasmic-facing. A helical transmembrane segment spans residues 277 to 297 (LMAGLLIMSLSMMPVGMVSGL). Residues 298-299 (QQ) are Periplasmic-facing. A helical membrane pass occupies residues 300–320 (LFTLICLFYIGSIIAEPARET). Residues 321–339 (LSASLADARARGSYMGFSR) lie on the Cytoplasmic side of the membrane. A helical transmembrane segment spans residues 340–360 (LGLAIGGAIGYIGGGWLFDLG). The Periplasmic portion of the chain corresponds to 361-367 (KSAHQPE). Residues 368-388 (LPWMMLGIIGIFTFLALGWQF) form a helical membrane-spanning segment. Residues 389 to 402 (SQKRTARRLLERDA) lie on the Cytoplasmic side of the membrane.

This sequence belongs to the major facilitator superfamily. DHA1 family. MdtH (TC 2.A.1.2.21) subfamily.

It is found in the cell inner membrane. Functionally, confers resistance to norfloxacin and enoxacin. In Escherichia coli O7:K1 (strain IAI39 / ExPEC), this protein is Multidrug resistance protein MdtH.